Here is a 1176-residue protein sequence, read N- to C-terminus: Translation initiation factor IF-2 (1176 aa).

Composition is skewed to low complexity over residues 32-44 (IAAKSHSSSISDS), 57-79 (ASPSQPTAPAAKPAPAKPAAGKS), 94-166 (APVA…AAPS), and 193-235 (KPTP…VKPT). 2 disordered regions span residues 32-502 (IAAK…QRQK) and 535-567 (RPAKPKAQQRTAPKPVAAVRKRRKETARQRQRR). The span at 251–270 (APPPASTPRPAPSRPTPRPA) shows a compositional bias: pro residues. Composition is skewed to low complexity over residues 388–409 (GRPGAPTRPGAPTRPGMPGGMR) and 439–469 (NRPTEAAGTATPPVARPTAPSAPRRPGFRPG). Positions 478–492 (GRPDWDDSAKLEALR) are enriched in basic and acidic residues. The segment covering 553–567 (VRKRRKETARQRQRR) has biased composition (basic residues). Residues 668–840 (RRPPVVTVMG…LLLVTEVEDL (173 aa)) enclose the tr-type G domain. The tract at residues 677–684 (GHVDHGKT) is G1. 677 to 684 (GHVDHGKT) provides a ligand contact to GTP. Positions 702–706 (GITQH) are G2. Positions 727–730 (DTPG) are G3. GTP contacts are provided by residues 727–731 (DTPGH) and 781–784 (NKID). The tract at residues 781–784 (NKID) is G4. The G5 stretch occupies residues 817-819 (SAI).

The protein belongs to the TRAFAC class translation factor GTPase superfamily. Classic translation factor GTPase family. IF-2 subfamily.

The protein localises to the cytoplasm. In terms of biological role, one of the essential components for the initiation of protein synthesis. Protects formylmethionyl-tRNA from spontaneous hydrolysis and promotes its binding to the 30S ribosomal subunits. Also involved in the hydrolysis of GTP during the formation of the 70S ribosomal complex. This Synechococcus sp. (strain CC9902) protein is Translation initiation factor IF-2.